The sequence spans 350 residues: Small ribosomal subunit biogenesis GTPase RsgA (350 aa).

A compositionally biased stretch (polar residues) spans 1–17; that stretch reads MSKNKLSKGQQRRVQAN. Residues 1-35 are disordered; it reads MSKNKLSKGQQRRVQANHQRRLRTDRKPELDDSQL. A CP-type G domain is found at 103–273; sequence TSVLTRPDLY…VIDSPGVREF (171 aa). Residues 159–162 and 213–221 each bind GTP; these read NKID and GQSGVGKSS. 4 residues coordinate Zn(2+): cysteine 297, cysteine 302, histidine 304, and cysteine 310.

The protein belongs to the TRAFAC class YlqF/YawG GTPase family. RsgA subfamily. Monomer. Associates with 30S ribosomal subunit, binds 16S rRNA. Zn(2+) is required as a cofactor.

It localises to the cytoplasm. Its function is as follows. One of several proteins that assist in the late maturation steps of the functional core of the 30S ribosomal subunit. Helps release RbfA from mature subunits. May play a role in the assembly of ribosomal proteins into the subunit. Circularly permuted GTPase that catalyzes slow GTP hydrolysis, GTPase activity is stimulated by the 30S ribosomal subunit. The sequence is that of Small ribosomal subunit biogenesis GTPase RsgA from Yersinia pseudotuberculosis serotype O:1b (strain IP 31758).